The primary structure comprises 434 residues: Ribosomal RNA-processing protein 14 (434 aa).

At Ser2 the chain carries N-acetylserine. 3 stretches are compositionally biased toward basic and acidic residues: residues 32–58 (KSQE…LDPE), 70–79 (VMKKKEKDAK), and 95–105 (KQKEATSKVEG). The disordered stretch occupies residues 32–257 (KSQEQWKAKK…RFKKGKKDSE (226 aa)). Acidic residues predominate over residues 121–140 (PDEDEEEEEDIKVIFDDEGN). The span at 144–178 (LESKKDTTEPDRSVEKKSITEEEKLQRKKNLEALR) shows a compositional bias: basic and acidic residues. 2 coiled-coil regions span residues 162–230 (ITEE…EIAS) and 293–360 (AKND…QKRK). Positions 220–241 (EQEQDQDEIASDSDMEDIDSDL) are enriched in acidic residues. Over residues 375 to 392 (TISERQKRREENLRIRKD) the composition is skewed to basic and acidic residues. The tract at residues 375-434 (TISERQKRREENLRIRKDNKGKKRNKQEKMKRKYVGSAVPKKRAGFEGRLKTGKKKGGPK) is disordered. Composition is skewed to basic residues over residues 393–408 (NKGK…KRKY) and 425–434 (KTGKKKGGPK).

It belongs to the SURF6 family. Component of the 90S and 60S pre-ribosomal particles.

Its subcellular location is the nucleus. The protein localises to the nucleolus. In terms of biological role, involved in ribosome biogenesis and cell polarity. Required for the synthesis of both 40S and 60S ribosomal subunits and may also play some direct role in correct positioning of the mitotic spindle during mitosis. The sequence is that of Ribosomal RNA-processing protein 14 (RRP14) from Saccharomyces cerevisiae (strain ATCC 204508 / S288c) (Baker's yeast).